Reading from the N-terminus, the 666-residue chain is Non-receptor tyrosine-protein kinase TNK1 (666 aa).

Residues Ser60 and Ser96 each carry the phosphoserine modification. Residues 116–377 (VCRGELLGSG…PSFSHLEGLL (262 aa)) enclose the Protein kinase domain. Residues 122–130 (LGSGCFGVV) and Lys148 contribute to the ATP site. Residue Asp245 is the Proton acceptor of the active site. Residues Ser255 and Ser411 each carry the phosphoserine modification. Residues 380-445 (AGPSEACCVR…PASAVTLADA (66 aa)) form the SH3 domain. Residues 446–493 (GGLPATRPVHRGTPARGDQHPGSIDGDRKKANLWDAPPARGQRRNMPL) form a disordered region. Position 502 is a phosphoserine (Ser502). The disordered stretch occupies residues 506–579 (VLSLGPRPTG…MGMPGARKAA (74 aa)). The residue at position 514 (Thr514) is a Phosphothreonine. Position 519 is a phosphoserine (Ser519). Residues 531 to 541 (QGPPGLPPRPP) show a composition bias toward pro residues. The segment covering 542-552 (LSSSSPQPSQP) has biased composition (low complexity). At Ser582 the chain carries Phosphoserine.

Belongs to the protein kinase superfamily. Tyr protein kinase family. Interacts with the SH3 domain of PLCG1 via its Pro-rich domain. In terms of processing, autophosphorylated on tyrosine residues. As to expression, expressed in all umbilical cord blood, bone marrow and adult blood cell sub-populations and in several leukemia cell lines. Highly expressed in fetal blood, brain, lung, liver and kidney. Detected at lower levels in adult prostate, testis, ovary, small intestine and colon. Not expressed in adult lung, liver, kidney or brain.

Its subcellular location is the cytoplasm. The protein resides in the membrane. The catalysed reaction is L-tyrosyl-[protein] + ATP = O-phospho-L-tyrosyl-[protein] + ADP + H(+). Its function is as follows. Involved in negative regulation of cell growth. Has tumor suppressor properties. Plays a negative regulatory role in the Ras-MAPK pathway. May function in signaling pathways utilized broadly during fetal development and more selectively in adult tissues and in cells of the lymphohematopoietic system. Could specifically be involved in phospholipid signal transduction. This chain is Non-receptor tyrosine-protein kinase TNK1, found in Homo sapiens (Human).